The following is a 644-amino-acid chain: Exoribonuclease 2 (644 aa).

An RNB domain is found at R189 to K516. An S1 motif domain is found at D561–V643.

Belongs to the RNR ribonuclease family. RNase II subfamily.

It is found in the cytoplasm. The catalysed reaction is Exonucleolytic cleavage in the 3'- to 5'-direction to yield nucleoside 5'-phosphates.. Functionally, involved in mRNA degradation. Hydrolyzes single-stranded polyribonucleotides processively in the 3' to 5' direction. This Escherichia coli (strain UTI89 / UPEC) protein is Exoribonuclease 2.